The sequence spans 535 residues: GMP synthase [glutamine-hydrolyzing] (535 aa).

A Glutamine amidotransferase type-1 domain is found at 24–217; sequence KILIVDFGSQ…VRKVAGLKGD (194 aa). Residue C101 is the Nucleophile of the active site. Catalysis depends on residues H191 and E193. Residues 218-410 enclose the GMPS ATP-PPase domain; sequence WTMRAFREEA…LGLPEVFVGR (193 aa). Position 245 to 251 (245 to 251) interacts with ATP; the sequence is SGGVDSA.

In terms of assembly, homodimer.

It catalyses the reaction XMP + L-glutamine + ATP + H2O = GMP + L-glutamate + AMP + diphosphate + 2 H(+). Its pathway is purine metabolism; GMP biosynthesis; GMP from XMP (L-Gln route): step 1/1. In terms of biological role, catalyzes the synthesis of GMP from XMP. This chain is GMP synthase [glutamine-hydrolyzing], found in Rhodopseudomonas palustris (strain BisB18).